We begin with the raw amino-acid sequence, 37 residues long: Large ribosomal subunit protein bL36 (37 aa).

Residues Cys11, Cys14, Cys27, and His32 each coordinate Zn(2+).

This sequence belongs to the bacterial ribosomal protein bL36 family. In terms of assembly, part of the 50S ribosomal subunit. It depends on Zn(2+) as a cofactor.

In terms of biological role, binds the 23S rRNA. The protein is Large ribosomal subunit protein bL36 (rpmJ) of Deinococcus radiodurans (strain ATCC 13939 / DSM 20539 / JCM 16871 / CCUG 27074 / LMG 4051 / NBRC 15346 / NCIMB 9279 / VKM B-1422 / R1).